We begin with the raw amino-acid sequence, 217 residues long: Uracil-DNA glycosylase (217 aa).

Asp62 acts as the Proton acceptor in catalysis.

This sequence belongs to the uracil-DNA glycosylase (UDG) superfamily. UNG family.

Its subcellular location is the cytoplasm. The enzyme catalyses Hydrolyzes single-stranded DNA or mismatched double-stranded DNA and polynucleotides, releasing free uracil.. Its function is as follows. Excises uracil residues from the DNA which can arise as a result of misincorporation of dUMP residues by DNA polymerase or due to deamination of cytosine. This chain is Uracil-DNA glycosylase, found in Streptococcus gordonii (strain Challis / ATCC 35105 / BCRC 15272 / CH1 / DL1 / V288).